The sequence spans 188 residues: Elongation factor P (188 aa).

Residue Lys34 is modified to N6-(3,6-diaminohexanoyl)-5-hydroxylysine.

It belongs to the elongation factor P family. In terms of processing, may be beta-lysylated on the epsilon-amino group of Lys-34 by the combined action of EpmA and EpmB, and then hydroxylated on the C5 position of the same residue by EpmC (if this protein is present). Lysylation is critical for the stimulatory effect of EF-P on peptide-bond formation. The lysylation moiety may extend toward the peptidyltransferase center and stabilize the terminal 3-CCA end of the tRNA. Hydroxylation of the C5 position on Lys-34 may allow additional potential stabilizing hydrogen-bond interactions with the P-tRNA.

It localises to the cytoplasm. Its pathway is protein biosynthesis; polypeptide chain elongation. Functionally, involved in peptide bond synthesis. Alleviates ribosome stalling that occurs when 3 or more consecutive Pro residues or the sequence PPG is present in a protein, possibly by augmenting the peptidyl transferase activity of the ribosome. Modification of Lys-34 is required for alleviation. This Xanthomonas campestris pv. campestris (strain B100) protein is Elongation factor P.